Consider the following 498-residue polypeptide: ATP synthase subunit beta, chloroplastic (498 aa).

Position 172 to 179 (172 to 179 (GGAGVGKT)) interacts with ATP.

It belongs to the ATPase alpha/beta chains family. F-type ATPases have 2 components, CF(1) - the catalytic core - and CF(0) - the membrane proton channel. CF(1) has five subunits: alpha(3), beta(3), gamma(1), delta(1), epsilon(1). CF(0) has four main subunits: a(1), b(1), b'(1) and c(9-12).

The protein localises to the plastid. It localises to the chloroplast thylakoid membrane. The catalysed reaction is ATP + H2O + 4 H(+)(in) = ADP + phosphate + 5 H(+)(out). Functionally, produces ATP from ADP in the presence of a proton gradient across the membrane. The catalytic sites are hosted primarily by the beta subunits. The sequence is that of ATP synthase subunit beta, chloroplastic from Phoenix dactylifera (Date palm).